Reading from the N-terminus, the 441-residue chain is Enolase (441 aa).

Gln164 is a (2R)-2-phosphoglycerate binding site. Catalysis depends on Glu206, which acts as the Proton donor. Asp243, Glu289, and Asp316 together coordinate Mg(2+). (2R)-2-phosphoglycerate contacts are provided by Lys341, Arg370, Ser371, and Lys392. Catalysis depends on Lys341, which acts as the Proton acceptor.

Belongs to the enolase family. Mg(2+) is required as a cofactor.

Its subcellular location is the cytoplasm. The protein resides in the secreted. The protein localises to the cell surface. It catalyses the reaction (2R)-2-phosphoglycerate = phosphoenolpyruvate + H2O. It participates in carbohydrate degradation; glycolysis; pyruvate from D-glyceraldehyde 3-phosphate: step 4/5. Catalyzes the reversible conversion of 2-phosphoglycerate (2-PG) into phosphoenolpyruvate (PEP). It is essential for the degradation of carbohydrates via glycolysis. The sequence is that of Enolase from Leuconostoc citreum (strain KM20).